Here is an 86-residue protein sequence, read N- to C-terminus: UPF0473 protein Clos_1662 (86 aa).

It belongs to the UPF0473 family.

This is UPF0473 protein Clos_1662 from Alkaliphilus oremlandii (strain OhILAs) (Clostridium oremlandii (strain OhILAs)).